We begin with the raw amino-acid sequence, 750 residues long: Protein psiO (750 aa).

An N-terminal signal peptide occupies residues 1–22 (MKEKIKLSLLILTSIILAVANS). The Extracellular portion of the chain corresponds to 23–688 (QTQPKTLAMT…GCNTAAVVST (666 aa)). N-linked (GlcNAc...) asparagine glycosylation is present at asparagine 129. The PA14 domain maps to 140–286 (QEYFPINGKG…DDYCGVCNGD (147 aa)). N-linked (GlcNAc...) asparagine glycosylation is found at asparagine 447, asparagine 506, asparagine 554, asparagine 571, and asparagine 659. A helical transmembrane segment spans residues 689 to 709 (AVIAGVTVAAVVGLGIFLYGG). The Cytoplasmic segment spans residues 710–750 (KKGYDYYQDNKSKGMTGANSNPLYKESGNAGQNPLYNDNNL). A disordered region spans residues 727 to 750 (ANSNPLYKESGNAGQNPLYNDNNL). Positions 738–750 (NAGQNPLYNDNNL) are enriched in polar residues.

The protein belongs to the prespore-cell-inducing factor family.

The protein localises to the membrane. This Dictyostelium discoideum (Social amoeba) protein is Protein psiO (psiO).